Reading from the N-terminus, the 558-residue chain is Membrane protein insertase YidC (558 aa).

5 consecutive transmembrane segments (helical) span residues 6-26 (SFFI…WDDE), 359-379 (FIHT…TVII), 434-454 (LGGC…YYML), 480-500 (ILPI…PTTI), and 513-533 (LVIF…YYII).

The protein belongs to the OXA1/ALB3/YidC family. Type 1 subfamily. As to quaternary structure, interacts with the Sec translocase complex via SecD. Specifically interacts with transmembrane segments of nascent integral membrane proteins during membrane integration.

The protein localises to the cell inner membrane. In terms of biological role, required for the insertion and/or proper folding and/or complex formation of integral membrane proteins into the membrane. Involved in integration of membrane proteins that insert both dependently and independently of the Sec translocase complex, as well as at least some lipoproteins. Aids folding of multispanning membrane proteins. The polypeptide is Membrane protein insertase YidC (Blochmanniella floridana).